A 340-amino-acid chain; its full sequence is UDP-3-O-acylglucosamine N-acyltransferase (340 aa).

The Proton acceptor role is filled by His238.

Belongs to the transferase hexapeptide repeat family. LpxD subfamily. In terms of assembly, homotrimer.

It catalyses the reaction a UDP-3-O-[(3R)-3-hydroxyacyl]-alpha-D-glucosamine + a (3R)-hydroxyacyl-[ACP] = a UDP-2-N,3-O-bis[(3R)-3-hydroxyacyl]-alpha-D-glucosamine + holo-[ACP] + H(+). It functions in the pathway bacterial outer membrane biogenesis; LPS lipid A biosynthesis. Catalyzes the N-acylation of UDP-3-O-acylglucosamine using 3-hydroxyacyl-ACP as the acyl donor. Is involved in the biosynthesis of lipid A, a phosphorylated glycolipid that anchors the lipopolysaccharide to the outer membrane of the cell. This chain is UDP-3-O-acylglucosamine N-acyltransferase, found in Psychromonas ingrahamii (strain DSM 17664 / CCUG 51855 / 37).